The primary structure comprises 392 residues: ATP phosphoribosyltransferase regulatory subunit (392 aa).

Belongs to the class-II aminoacyl-tRNA synthetase family. HisZ subfamily. Heteromultimer composed of HisG and HisZ subunits.

It localises to the cytoplasm. Its pathway is amino-acid biosynthesis; L-histidine biosynthesis; L-histidine from 5-phospho-alpha-D-ribose 1-diphosphate: step 1/9. Its function is as follows. Required for the first step of histidine biosynthesis. May allow the feedback regulation of ATP phosphoribosyltransferase activity by histidine. In Synechococcus sp. (strain CC9902), this protein is ATP phosphoribosyltransferase regulatory subunit.